Here is a 201-residue protein sequence, read N- to C-terminus: Small ribosomal subunit protein uS10m (201 aa).

This sequence belongs to the universal ribosomal protein uS10 family. Component of the mitochondrial small ribosomal subunit (mt-SSU). Mature mammalian 55S mitochondrial ribosomes consist of a small (28S) and a large (39S) subunit. The 28S small subunit contains a 12S ribosomal RNA (12S mt-rRNA) and 30 different proteins. The 39S large subunit contains a 16S rRNA (16S mt-rRNA), a copy of mitochondrial valine transfer RNA (mt-tRNA(Val)), which plays an integral structural role, and 52 different proteins.

Its subcellular location is the mitochondrion. The protein is Small ribosomal subunit protein uS10m (MRPS10) of Homo sapiens (Human).